Consider the following 37-residue polypeptide: Large ribosomal subunit protein bL36c (37 aa).

The protein belongs to the bacterial ribosomal protein bL36 family.

Its subcellular location is the plastid. The protein resides in the chloroplast. The chain is Large ribosomal subunit protein bL36c (rpl36) from Euglena gracilis.